We begin with the raw amino-acid sequence, 129 residues long: Small ribosomal subunit protein uS11c (129 aa).

It belongs to the universal ribosomal protein uS11 family. As to quaternary structure, part of the 30S ribosomal subunit.

The protein resides in the plastid. The protein localises to the chloroplast. This is Small ribosomal subunit protein uS11c from Euglena gracilis.